Consider the following 185-residue polypeptide: MSGSFELSVQDLNDLLSDGSGCYSLPSQPCNEVTPRIYVGNASVAQDIPKLQKLGITHVLNAAEGRSFMHVNTNANFYKDSGITYLGIKANDTQEFNLSAYFERAADFIDQALAQKNGRVLVHCREGYSRSPTLVIAYLMMRQKMDVKSALSIVRQNREIGPNDGFLAQLCQLNDRLAKEGKLKP.

The Tyrosine-protein phosphatase domain occupies 28-179 (QPCNEVTPRI…LCQLNDRLAK (152 aa)). The active-site Phosphocysteine intermediate is the Cys-124.

This sequence belongs to the protein-tyrosine phosphatase family. Non-receptor class dual specificity subfamily. In terms of assembly, microtubule inner protein component of sperm flagellar doublet microtubules. Interacts with VRK3; this interaction activates DUSP3 phosphatase activity.

The protein resides in the nucleus. It is found in the cytoplasm. The protein localises to the cytoskeleton. Its subcellular location is the flagellum axoneme. It carries out the reaction O-phospho-L-tyrosyl-[protein] + H2O = L-tyrosyl-[protein] + phosphate. The catalysed reaction is O-phospho-L-seryl-[protein] + H2O = L-seryl-[protein] + phosphate. The enzyme catalyses O-phospho-L-threonyl-[protein] + H2O = L-threonyl-[protein] + phosphate. Its function is as follows. Shows activity both for tyrosine-protein phosphate and serine-protein phosphate, but displays a strong preference toward phosphotyrosines. Specifically dephosphorylates and inactivates ERK1 and ERK2. The protein is Dual specificity protein phosphatase 3 (DUSP3) of Homo sapiens (Human).